The chain runs to 86 residues: Translation initiation factor IF-1 2 (86 aa).

Residues 1 to 72 enclose the S1-like domain; it reads MAKEELLEME…TKARISFRHK (72 aa).

Belongs to the IF-1 family. Component of the 30S ribosomal translation pre-initiation complex which assembles on the 30S ribosome in the order IF-2 and IF-3, IF-1 and N-formylmethionyl-tRNA(fMet); mRNA recruitment can occur at any time during PIC assembly.

The protein resides in the cytoplasm. In terms of biological role, one of the essential components for the initiation of protein synthesis. Stabilizes the binding of IF-2 and IF-3 on the 30S subunit to which N-formylmethionyl-tRNA(fMet) subsequently binds. Helps modulate mRNA selection, yielding the 30S pre-initiation complex (PIC). Upon addition of the 50S ribosomal subunit IF-1, IF-2 and IF-3 are released leaving the mature 70S translation initiation complex. This Aromatoleum aromaticum (strain DSM 19018 / LMG 30748 / EbN1) (Azoarcus sp. (strain EbN1)) protein is Translation initiation factor IF-1 2.